The following is an 898-amino-acid chain: Neutral alpha-glucosidase C (898 aa).

The segment at 154 to 173 is disordered; the sequence is QRATKGNGQNTPAATSQENQ. Over residues 157–171 the composition is skewed to polar residues; that stretch reads TKGNGQNTPAATSQE. Catalysis depends on Asp495, which acts as the Nucleophile. Glu498 is a catalytic residue. The Proton donor role is filled by Asp571.

This sequence belongs to the glycosyl hydrolase 31 family.

It carries out the reaction Hydrolysis of terminal, non-reducing (1-&gt;4)-linked alpha-D-glucose residues with release of alpha-D-glucose.. In terms of biological role, has alpha-glucosidase activity. The chain is Neutral alpha-glucosidase C (Ganc) from Mus musculus (Mouse).